The following is a 586-amino-acid chain: Arginine--tRNA ligase (586 aa).

The 'HIGH' region motif lies at 128–138 (ANPTGPLHVGH).

Belongs to the class-I aminoacyl-tRNA synthetase family. As to quaternary structure, monomer.

The protein resides in the cytoplasm. It catalyses the reaction tRNA(Arg) + L-arginine + ATP = L-arginyl-tRNA(Arg) + AMP + diphosphate. In Thioalkalivibrio sulfidiphilus (strain HL-EbGR7), this protein is Arginine--tRNA ligase.